The following is a 417-amino-acid chain: Probable glucuronosyltransferase Os01g0926700 (417 aa).

Residues 1-3 (MRR) lie on the Cytoplasmic side of the membrane. A helical; Signal-anchor for type II membrane protein membrane pass occupies residues 4–24 (WVLAIAILAAAVCFFLGAQAQ). The Lumenal portion of the chain corresponds to 25-417 (EVRQGHQTER…AGPVGDLKPW (393 aa)). N-linked (GlcNAc...) asparagine glycans are attached at residues Asn144 and Asn405.

It belongs to the glycosyltransferase 47 family.

It localises to the golgi apparatus membrane. In terms of biological role, involved in the synthesis of glucuronoxylan hemicellulose in secondary cell walls. This chain is Probable glucuronosyltransferase Os01g0926700, found in Oryza sativa subsp. japonica (Rice).